The primary structure comprises 487 residues: Glutamyl-tRNA(Gln) amidotransferase subunit A (487 aa).

Residues lysine 75 and serine 150 each act as charge relay system in the active site. Serine 174 acts as the Acyl-ester intermediate in catalysis.

Belongs to the amidase family. GatA subfamily. In terms of assembly, heterotrimer of A, B and C subunits.

It catalyses the reaction L-glutamyl-tRNA(Gln) + L-glutamine + ATP + H2O = L-glutaminyl-tRNA(Gln) + L-glutamate + ADP + phosphate + H(+). Its function is as follows. Allows the formation of correctly charged Gln-tRNA(Gln) through the transamidation of misacylated Glu-tRNA(Gln) in organisms which lack glutaminyl-tRNA synthetase. The reaction takes place in the presence of glutamine and ATP through an activated gamma-phospho-Glu-tRNA(Gln). In Deinococcus deserti (strain DSM 17065 / CIP 109153 / LMG 22923 / VCD115), this protein is Glutamyl-tRNA(Gln) amidotransferase subunit A.